The primary structure comprises 163 residues: Odorant-binding protein 1a (163 aa).

The first 16 residues, 1–16 (MAKFLLLALTFGLAHA), serve as a signal peptide directing secretion. Intrachain disulfides connect Cys-50–Cys-54 and Cys-69–Cys-161.

This sequence belongs to the calycin superfamily. Lipocalin family. In terms of assembly, may form a heterodimer with OBP1B. The N-terminus may be blocked. In terms of tissue distribution, expressed in nasal mucosa (at protein level). Specifically detected in septal and lateral nasal glands.

It localises to the secreted. In terms of biological role, binds the chemical odorant 2-isobutyl-3-methoxypyrazine. This chain is Odorant-binding protein 1a, found in Mus musculus (Mouse).